The following is a 195-amino-acid chain: Morphogenetic protein (195 aa).

Assembly factor active in membrane morphogenesis. This Pseudomonas phage phi6 (Bacteriophage phi-6) protein is Morphogenetic protein (P12).